Reading from the N-terminus, the 213-residue chain is Imidazole glycerol phosphate synthase subunit HisH (213 aa).

The Glutamine amidotransferase type-1 domain maps to 4-211 (NLGVIDYGMG…LHWLHQGAEP (208 aa)). C82 (nucleophile) is an active-site residue. Active-site residues include H186 and E188.

As to quaternary structure, heterodimer of HisH and HisF.

The protein resides in the cytoplasm. The enzyme catalyses 5-[(5-phospho-1-deoxy-D-ribulos-1-ylimino)methylamino]-1-(5-phospho-beta-D-ribosyl)imidazole-4-carboxamide + L-glutamine = D-erythro-1-(imidazol-4-yl)glycerol 3-phosphate + 5-amino-1-(5-phospho-beta-D-ribosyl)imidazole-4-carboxamide + L-glutamate + H(+). It catalyses the reaction L-glutamine + H2O = L-glutamate + NH4(+). Its pathway is amino-acid biosynthesis; L-histidine biosynthesis; L-histidine from 5-phospho-alpha-D-ribose 1-diphosphate: step 5/9. Its function is as follows. IGPS catalyzes the conversion of PRFAR and glutamine to IGP, AICAR and glutamate. The HisH subunit catalyzes the hydrolysis of glutamine to glutamate and ammonia as part of the synthesis of IGP and AICAR. The resulting ammonia molecule is channeled to the active site of HisF. The sequence is that of Imidazole glycerol phosphate synthase subunit HisH from Synechococcus sp. (strain CC9902).